The chain runs to 600 residues: Alpha pinene synthase, chloroplastic (600 aa).

Residues 1 to 27 form a disordered region; sequence MSSISMHAGPLNISAANNHHPSWDRRV. A chloroplast-targeting transit peptide spans 1 to 31; it reads MSSISMHAGPLNISAANNHHPSWDRRVSKPR. 4 residues coordinate Mg(2+): aspartate 354, aspartate 358, aspartate 498, and glutamate 506. Positions 354 to 358 match the DDXXD motif motif; sequence DDVYD.

This sequence belongs to the terpene synthase family. Tpsa subfamily. Requires Mg(2+) as cofactor. It depends on Mn(2+) as a cofactor. As to expression, expressed at low levels in leaves.

The protein resides in the plastid. The protein localises to the chloroplast. The catalysed reaction is (2E)-geranyl diphosphate = alpha-pinene + diphosphate. It functions in the pathway secondary metabolite biosynthesis; terpenoid biosynthesis. Its function is as follows. Monoterpene synthase involved in the biosynthesis of volatile compounds widely used in aromatherapy and folk medicine, and present in culinary herbs. Mediates the conversion of (2E)-geranyl diphosphate (GPP) into alpha-pinene and, as minor compounds, into alpha-phellandrene, limonene and alpha-terpinolene. This is Alpha pinene synthase, chloroplastic from Lavandula viridis (Green lavender).